A 486-amino-acid chain; its full sequence is Glutamyl-tRNA(Gln) amidotransferase subunit A (486 aa).

Residues Lys79 and Ser154 each act as charge relay system in the active site. Catalysis depends on Ser178, which acts as the Acyl-ester intermediate.

The protein belongs to the amidase family. GatA subfamily. As to quaternary structure, heterotrimer of A, B and C subunits.

The catalysed reaction is L-glutamyl-tRNA(Gln) + L-glutamine + ATP + H2O = L-glutaminyl-tRNA(Gln) + L-glutamate + ADP + phosphate + H(+). In terms of biological role, allows the formation of correctly charged Gln-tRNA(Gln) through the transamidation of misacylated Glu-tRNA(Gln) in organisms which lack glutaminyl-tRNA synthetase. The reaction takes place in the presence of glutamine and ATP through an activated gamma-phospho-Glu-tRNA(Gln). The chain is Glutamyl-tRNA(Gln) amidotransferase subunit A from Dehalococcoides mccartyi (strain CBDB1).